The following is a 94-amino-acid chain: ESAT-6-like protein EsxN (94 aa).

Belongs to the WXG100 family. ESAT-6 subfamily.

It localises to the secreted. The sequence is that of ESAT-6-like protein EsxN from Mycobacterium bovis (strain ATCC BAA-935 / AF2122/97).